Here is a 278-residue protein sequence, read N- to C-terminus: Large ribosomal subunit protein uL2 (278 aa).

Residues 212-278 (NRHRGIRPQT…IISRKKHKKG (67 aa)) form a disordered region. A compositionally biased stretch (basic residues) spans 257 to 278 (YKTRKKKASDKLIISRKKHKKG).

The protein belongs to the universal ribosomal protein uL2 family. Part of the 50S ribosomal subunit. Forms a bridge to the 30S subunit in the 70S ribosome.

Its function is as follows. One of the primary rRNA binding proteins. Required for association of the 30S and 50S subunits to form the 70S ribosome, for tRNA binding and peptide bond formation. It has been suggested to have peptidyltransferase activity; this is somewhat controversial. Makes several contacts with the 16S rRNA in the 70S ribosome. The sequence is that of Large ribosomal subunit protein uL2 from Helicobacter pylori (strain Shi470).